The chain runs to 20 residues: Cruzioseptin-15 (20 aa).

As to expression, expressed by the skin glands.

The protein resides in the secreted. Functionally, has antimicrobial activity. This Cruziohyla calcarifer (Splendid leaf frog) protein is Cruzioseptin-15.